A 402-amino-acid chain; its full sequence is Zinc finger CCCH domain-containing protein 35 (402 aa).

2 consecutive C3H1-type zinc fingers follow at residues 117–144 (CYSGTACPDFRKGGCKRGDACEFAHGVF) and 152–176 (RYRTQPCKDGTACRRRVCFFAHTPD). Disordered regions lie at residues 180–211 (VLPPSQQQGSNSPRGCGGGGAGAAASPLAESY) and 232–258 (SSPTSTLVSPPRSPPSESPPLSPDAAG). A compositionally biased stretch (polar residues) spans 183 to 192 (PSQQQGSNSP). The span at 232–241 (SSPTSTLVSP) shows a compositional bias: low complexity. The span at 242-253 (PRSPPSESPPLS) shows a compositional bias: pro residues.

The polypeptide is Zinc finger CCCH domain-containing protein 35 (Oryza sativa subsp. japonica (Rice)).